A 632-amino-acid polypeptide reads, in one-letter code: Effector protein hopAD1 (632 aa).

Residues 13–34 are disordered; sequence TAVDSSLPTSATSQTISNTKSR. Residues 15-32 show a composition bias toward polar residues; it reads VDSSLPTSATSQTISNTK.

The protein localises to the secreted. This chain is Effector protein hopAD1 (hopAD1), found in Pseudomonas syringae pv. tomato (strain ATCC BAA-871 / DC3000).